The sequence spans 296 residues: MADQASWLERFTRYLATERQLSPMTVRNYRFELERADTLLGQRSWQQLSRQDLSGLMARLHRQGLSPRSLSLTASALKQFGQFLLKEGLIDTNPAATLSAPKQSKTLPKNLDPDSVNHLLDIPPEDGLALRDKAIMELFYSCGLRLAELAALDVKDLDRESREVRVIGKGSKERILPVGSVALAAIGDWLKVRNQMPCQDDALFVSSRGSRLSHRSIQARMEKWAQIQGLSVGVHPHKLRHSFATHMLESSGDLRAVQELLGHANLATTQIYTSLDFQHLAKVYDGAHPRARKKGD.

The 84-residue stretch at 2-85 (ADQASWLERF…ALKQFGQFLL (84 aa)) folds into the Core-binding (CB) domain. A Tyr recombinase domain is found at 106–285 (TLPKNLDPDS…DFQHLAKVYD (180 aa)). Residues Arg145, Lys169, His237, Arg240, and His263 contribute to the active site. Catalysis depends on Tyr272, which acts as the O-(3'-phospho-DNA)-tyrosine intermediate.

The protein belongs to the 'phage' integrase family. XerC subfamily. In terms of assembly, forms a cyclic heterotetrameric complex composed of two molecules of XerC and two molecules of XerD.

It is found in the cytoplasm. Its function is as follows. Site-specific tyrosine recombinase, which acts by catalyzing the cutting and rejoining of the recombining DNA molecules. The XerC-XerD complex is essential to convert dimers of the bacterial chromosome into monomers to permit their segregation at cell division. It also contributes to the segregational stability of plasmids. This Shewanella amazonensis (strain ATCC BAA-1098 / SB2B) protein is Tyrosine recombinase XerC.